A 936-amino-acid chain; its full sequence is DNA topoisomerase 1 (936 aa).

Residues 15–139 form the Toprim domain; that stretch reads RRLVIVESPT…VKRMVFHEIT (125 aa). Residues E21 and D108 each coordinate Mg(2+). The region spanning 154–611 is the Topo IA-type catalytic domain; it reads DIALVDAQET…FYFGGEHGVE (458 aa). Residues 188-193 form an interaction with DNA region; that stretch reads SAGRVQ. The active-site O-(5'-phospho-DNA)-tyrosine intermediate is Y339. Disordered stretches follow at residues 661 to 688, 732 to 767, 841 to 884, and 903 to 936; these read LERM…LTPD, VLPE…SLFR, KRRG…ETNA, and LLAD…AKKA. Residues 910 to 936 show a composition bias toward basic residues; it reads RGPVKKKAPAKKAAKKAPAKKAAAKKA.

It belongs to the type IA topoisomerase family. In terms of assembly, monomer. The cofactor is Mg(2+).

The enzyme catalyses ATP-independent breakage of single-stranded DNA, followed by passage and rejoining.. Its function is as follows. Releases the supercoiling and torsional tension of DNA, which is introduced during the DNA replication and transcription, by transiently cleaving and rejoining one strand of the DNA duplex. Introduces a single-strand break via transesterification at a target site in duplex DNA. The scissile phosphodiester is attacked by the catalytic tyrosine of the enzyme, resulting in the formation of a DNA-(5'-phosphotyrosyl)-enzyme intermediate and the expulsion of a 3'-OH DNA strand. The free DNA strand then undergoes passage around the unbroken strand, thus removing DNA supercoils. Finally, in the religation step, the DNA 3'-OH attacks the covalent intermediate to expel the active-site tyrosine and restore the DNA phosphodiester backbone. In terms of biological role, relaxes negatively (but not positively) supercoiled DNA, concatanates and knots circular ssDNA at 52 but not 37 degrees Celsius. Preferentially nicks supercoiled DNA at C(G/T)CTT, cutting between the TT residues, binds ss and dsDNA with the recognition site. This chain is DNA topoisomerase 1, found in Mycolicibacterium smegmatis (strain ATCC 700084 / mc(2)155) (Mycobacterium smegmatis).